A 484-amino-acid polypeptide reads, in one-letter code: PTS system N-acetylmuramic acid-specific EIIBC component (484 aa).

A PTS EIIB type-1 domain is found at 1–89; it reads MAKITSNTVS…NQLIDSLTSG (89 aa). The active-site Phosphocysteine intermediate; for EIIB activity is the C28. The PTS EIIC type-1 domain occupies 125-484; that stretch reads SKFATIFTPL…FFGCKDVDLS (360 aa). 10 helical membrane passes run 127–147, 168–188, 194–214, 228–248, 266–286, 310–330, 345–365, 379–399, 409–429, and 451–471; these read FATI…LLGF, LIAY…ILIG, AFGG…LGYN, FFGF…AAII, MILT…LIIM, AAIL…QGFV, LFPI…ALYF, GAII…VTLP, IGGA…LPVG, and IFPG…VGFL.

The protein localises to the cell inner membrane. The catalysed reaction is N-acetyl-beta-D-muramate(out) + N(pros)-phospho-L-histidyl-[protein] = N-acetyl-beta-D-muramate 6-phosphate(in) + L-histidyl-[protein]. In terms of biological role, the phosphoenolpyruvate-dependent sugar phosphotransferase system (sugar PTS), a major carbohydrate active transport system, catalyzes the phosphorylation of incoming sugar substrates concomitantly with their translocation across the cell membrane. This system is involved in N-acetylmuramic acid (MurNAc) transport, yielding cytoplasmic MurNAc-6-P. Is also able to take up anhydro-N-acetylmuramic acid (anhMurNAc), but cannot phosphorylate the carbon 6, probably because of the 1,6-anhydro ring. The polypeptide is PTS system N-acetylmuramic acid-specific EIIBC component (murP) (Vibrio parahaemolyticus serotype O3:K6 (strain RIMD 2210633)).